Consider the following 94-residue polypeptide: UPF0337 protein NE2439 (94 aa).

Residues 74–94 (KNVGEAVSSRQKSVKKRSLYT) form a disordered region. Residues 85–94 (KSVKKRSLYT) are compositionally biased toward basic residues.

It belongs to the UPF0337 (CsbD) family.

This is UPF0337 protein NE2439 from Nitrosomonas europaea (strain ATCC 19718 / CIP 103999 / KCTC 2705 / NBRC 14298).